A 210-amino-acid chain; its full sequence is Putative protein-lysine deacylase ABHD14B (210 aa).

Ala2 is modified (N-acetylalanine). A Phosphoserine modification is found at Ser91. Active-site charge relay system residues include Ser111, Asp162, and His188.

The protein belongs to the AB hydrolase superfamily. ABHD14 family. As to quaternary structure, may interact with TAF1.

It is found in the cytoplasm. The protein localises to the nucleus. The enzyme catalyses L-lysyl-[protein] + acetyl-CoA = N(6)-acetyl-L-lysyl-[protein] + CoA + H(+). Functionally, acts as an atypical protein-lysine deacetylase in vitro. Catalyzes the deacetylation of lysine residues using CoA as substrate, generating acetyl-CoA and the free amine of protein-lysine residues. Additional experiments are however required to confirm the protein-lysine deacetylase activity in vivo. Has hydrolase activity towards various surrogate p-nitrophenyl (pNp) substrates, such as pNp-butyrate, pNp-acetate and pNp-octanoate in vitro, with a strong preference for pNp-acetate. May activate transcription. This Pongo abelii (Sumatran orangutan) protein is Putative protein-lysine deacylase ABHD14B.